A 735-amino-acid polypeptide reads, in one-letter code: Phosphoribosylformylglycinamidine synthase subunit PurL (735 aa).

H49 is an active-site residue. ATP contacts are provided by Y52 and K91. A Mg(2+)-binding site is contributed by E93. Substrate is bound by residues 94-97 and R116; that span reads SHNH. The active-site Proton acceptor is the H95. D117 contributes to the Mg(2+) binding site. Q240 is a binding site for substrate. D268 is a Mg(2+) binding site. 312–314 lines the substrate pocket; it reads ESQ. 2 residues coordinate ATP: D493 and G530. N531 contributes to the Mg(2+) binding site. Position 533 (S533) interacts with substrate.

Belongs to the FGAMS family. As to quaternary structure, monomer. Part of the FGAM synthase complex composed of 1 PurL, 1 PurQ and 2 PurS subunits.

The protein localises to the cytoplasm. The catalysed reaction is N(2)-formyl-N(1)-(5-phospho-beta-D-ribosyl)glycinamide + L-glutamine + ATP + H2O = 2-formamido-N(1)-(5-O-phospho-beta-D-ribosyl)acetamidine + L-glutamate + ADP + phosphate + H(+). It functions in the pathway purine metabolism; IMP biosynthesis via de novo pathway; 5-amino-1-(5-phospho-D-ribosyl)imidazole from N(2)-formyl-N(1)-(5-phospho-D-ribosyl)glycinamide: step 1/2. Its function is as follows. Part of the phosphoribosylformylglycinamidine synthase complex involved in the purines biosynthetic pathway. Catalyzes the ATP-dependent conversion of formylglycinamide ribonucleotide (FGAR) and glutamine to yield formylglycinamidine ribonucleotide (FGAM) and glutamate. The FGAM synthase complex is composed of three subunits. PurQ produces an ammonia molecule by converting glutamine to glutamate. PurL transfers the ammonia molecule to FGAR to form FGAM in an ATP-dependent manner. PurS interacts with PurQ and PurL and is thought to assist in the transfer of the ammonia molecule from PurQ to PurL. In Azorhizobium caulinodans (strain ATCC 43989 / DSM 5975 / JCM 20966 / LMG 6465 / NBRC 14845 / NCIMB 13405 / ORS 571), this protein is Phosphoribosylformylglycinamidine synthase subunit PurL.